The following is a 246-amino-acid chain: tRNA (guanine-N(1)-)-methyltransferase (246 aa).

S-adenosyl-L-methionine-binding positions include Gly113 and 133–138 (IGDFVM).

It belongs to the RNA methyltransferase TrmD family. Homodimer.

The protein resides in the cytoplasm. It catalyses the reaction guanosine(37) in tRNA + S-adenosyl-L-methionine = N(1)-methylguanosine(37) in tRNA + S-adenosyl-L-homocysteine + H(+). Specifically methylates guanosine-37 in various tRNAs. This is tRNA (guanine-N(1)-)-methyltransferase from Vibrio atlanticus (strain LGP32) (Vibrio splendidus (strain Mel32)).